The chain runs to 63 residues: Large ribosomal subunit protein bL32 (63 aa).

The segment at 1-20 (MANPKAKMSKSRRDKRRAQF) is disordered. Residues 7–18 (KMSKSRRDKRRA) are compositionally biased toward basic residues.

The protein belongs to the bacterial ribosomal protein bL32 family.

This Chlorobaculum tepidum (strain ATCC 49652 / DSM 12025 / NBRC 103806 / TLS) (Chlorobium tepidum) protein is Large ribosomal subunit protein bL32.